The following is a 177-amino-acid chain: Large ribosomal subunit protein uL5 (177 aa).

The protein belongs to the universal ribosomal protein uL5 family. Part of the 50S ribosomal subunit; part of the 5S rRNA/L5/L18/L25 subcomplex. Contacts the 5S rRNA and the P site tRNA. Forms a bridge to the 30S subunit in the 70S ribosome.

This is one of the proteins that bind and probably mediate the attachment of the 5S RNA into the large ribosomal subunit, where it forms part of the central protuberance. In the 70S ribosome it contacts protein S13 of the 30S subunit (bridge B1b), connecting the 2 subunits; this bridge is implicated in subunit movement. Contacts the P site tRNA; the 5S rRNA and some of its associated proteins might help stabilize positioning of ribosome-bound tRNAs. The polypeptide is Large ribosomal subunit protein uL5 (Ehrlichia ruminantium (strain Welgevonden)).